The following is a 140-amino-acid chain: Phosphoribosyl-AMP cyclohydrolase (140 aa).

Mg(2+) is bound at residue aspartate 84. Cysteine 85 serves as a coordination point for Zn(2+). The Mg(2+) site is built by aspartate 86 and aspartate 88. Residues cysteine 101 and cysteine 108 each contribute to the Zn(2+) site.

It belongs to the PRA-CH family. As to quaternary structure, homodimer. Requires Mg(2+) as cofactor. The cofactor is Zn(2+).

The protein localises to the cytoplasm. The catalysed reaction is 1-(5-phospho-beta-D-ribosyl)-5'-AMP + H2O = 1-(5-phospho-beta-D-ribosyl)-5-[(5-phospho-beta-D-ribosylamino)methylideneamino]imidazole-4-carboxamide. It functions in the pathway amino-acid biosynthesis; L-histidine biosynthesis; L-histidine from 5-phospho-alpha-D-ribose 1-diphosphate: step 3/9. Its function is as follows. Catalyzes the hydrolysis of the adenine ring of phosphoribosyl-AMP. In Chloroherpeton thalassium (strain ATCC 35110 / GB-78), this protein is Phosphoribosyl-AMP cyclohydrolase.